A 236-amino-acid polypeptide reads, in one-letter code: Chorionic somatomammotropin hormone (236 aa).

The N-terminal stretch at 1 to 36 is a signal peptide; sequence MAPASSHREHQWTCNLVRGSRLLLLLVVSNLILCQG. 3 disulfide bridges follow: Cys-44–Cys-51, Cys-97–Cys-212, and Cys-229–Cys-234.

The protein belongs to the somatotropin/prolactin family.

The protein resides in the secreted. This Ovis aries (Sheep) protein is Chorionic somatomammotropin hormone (CSH).